Reading from the N-terminus, the 313-residue chain is MLSITYSPAYTLVPTYECFNRCSYCNFRQEPRKDQWLTESVAKQRLESLAGRGIREILILAGEVHPQSSRRKAWFELIYNLGKIALDLGFYPHTNAGPLSRSEIARLKEVNFSLGLMLEQVSPRLLTTVHRQAPSKEPQLRLEQLRLAGELGIPFTTGLLLGIGETDQEVEESLMAIANVQQEYGHIQEVILQPHSPGQKQTDNISAYSPQKLVQVITLARAILPAEITLQIPPNLVPNFSDLLACLAAGVRDLGGIVPIDEVNPDYHHQSVNQLSQLLEENGYLLQPRFPVYPTYFSWLNCDLQQRLSVFIN.

The Radical SAM core domain maps to 4 to 235 (ITYSPAYTLV…AEITLQIPPN (232 aa)). 3 residues coordinate [4Fe-4S] cluster: C18, C22, and C25.

It belongs to the radical SAM superfamily. CofG family. As to quaternary structure, consists of two subunits, CofG and CofH. It depends on [4Fe-4S] cluster as a cofactor.

The enzyme catalyses 5-amino-5-(4-hydroxybenzyl)-6-(D-ribitylimino)-5,6-dihydrouracil + S-adenosyl-L-methionine = 7,8-didemethyl-8-hydroxy-5-deazariboflavin + 5'-deoxyadenosine + L-methionine + NH4(+) + H(+). It functions in the pathway cofactor biosynthesis; coenzyme F0 biosynthesis. In terms of biological role, catalyzes the radical-mediated synthesis of 7,8-didemethyl-8-hydroxy-5-deazariboflavin from 5-amino-5-(4-hydroxybenzyl)-6-(D-ribitylimino)-5,6-dihydrouracil. In Synechocystis sp. (strain ATCC 27184 / PCC 6803 / Kazusa), this protein is 7,8-didemethyl-8-hydroxy-5-deazariboflavin synthase.